The following is a 341-amino-acid chain: UDP-N-acetylenolpyruvoylglucosamine reductase (341 aa).

The 171-residue stretch at 15–185 folds into the FAD-binding PCMH-type domain; the sequence is LAQSCADLVE…TAVGLRLVKR (171 aa). Arginine 161 is a catalytic residue. Catalysis depends on serine 231, which acts as the Proton donor. Glutamate 327 is a catalytic residue.

It belongs to the MurB family. Requires FAD as cofactor.

It localises to the cytoplasm. It catalyses the reaction UDP-N-acetyl-alpha-D-muramate + NADP(+) = UDP-N-acetyl-3-O-(1-carboxyvinyl)-alpha-D-glucosamine + NADPH + H(+). It participates in cell wall biogenesis; peptidoglycan biosynthesis. In terms of biological role, cell wall formation. This Shewanella baltica (strain OS195) protein is UDP-N-acetylenolpyruvoylglucosamine reductase.